We begin with the raw amino-acid sequence, 363 residues long: Pyrimidine monooxygenase RutA (363 aa).

Residues 49 to 50 (IK), asparagine 115, glutamate 124, 140 to 141 (RY), and serine 190 contribute to the FMN site.

It belongs to the NtaA/SnaA/DszA monooxygenase family. RutA subfamily.

The catalysed reaction is uracil + FMNH2 + NADH + O2 = (Z)-3-ureidoacrylate + FMN + NAD(+) + H2O + H(+). It catalyses the reaction thymine + FMNH2 + NADH + O2 = (Z)-2-methylureidoacrylate + FMN + NAD(+) + H2O + H(+). Functionally, catalyzes the pyrimidine ring opening between N-3 and C-4 by an unusual flavin hydroperoxide-catalyzed mechanism, adding oxygen atoms in the process to yield ureidoacrylate peracid, that immediately reacts with FMN forming ureidoacrylate and FMN-N(5)-oxide. The FMN-N(5)-oxide reacts spontaneously with NADH to produce FMN. Requires the flavin reductase RutF to regenerate FMN in vivo. This Enterobacter cloacae subsp. cloacae (strain ATCC 13047 / DSM 30054 / NBRC 13535 / NCTC 10005 / WDCM 00083 / NCDC 279-56) protein is Pyrimidine monooxygenase RutA.